Here is a 366-residue protein sequence, read N- to C-terminus: DNA replication and repair protein RecF (366 aa).

Residue 30–37 (GRNAQGKT) coordinates ATP.

It belongs to the RecF family.

It localises to the cytoplasm. In terms of biological role, the RecF protein is involved in DNA metabolism; it is required for DNA replication and normal SOS inducibility. RecF binds preferentially to single-stranded, linear DNA. It also seems to bind ATP. This is DNA replication and repair protein RecF from Streptococcus thermophilus (strain CNRZ 1066).